We begin with the raw amino-acid sequence, 326 residues long: NADH-specific methylglyoxal reductase (326 aa).

NAD(+)-binding positions include 20 to 21 and aspartate 54; that span reads TW. The Proton donor role is filled by tyrosine 59. NAD(+)-binding positions include glutamine 189, 217–222, glycine 291, and glutamine 297; that span reads YSPLEQ.

This sequence belongs to the aldo/keto reductase family. Aldo/keto reductase 11 subfamily. Monomer.

The enzyme catalyses hydroxyacetone + NAD(+) = methylglyoxal + NADH + H(+). Catalyzes the NADH-dependent reduction of methylglyoxal (2-oxopropanal) in vitro. It is not known if this activity has physiological significance. Cannot use NADPH as a cosubstrate. Seems to play some role in intestinal colonization. The sequence is that of NADH-specific methylglyoxal reductase (ydjG) from Escherichia coli (strain K12).